The primary structure comprises 380 residues: 8-amino-7-oxononanoate synthase (380 aa).

Residue arginine 26 coordinates substrate. Position 104 to 105 (104 to 105 (GY)) interacts with pyridoxal 5'-phosphate. Residue histidine 129 participates in substrate binding. Pyridoxal 5'-phosphate-binding positions include serine 175, 200–203 (DEAH), and 232–235 (TLSK). Lysine 235 carries the post-translational modification N6-(pyridoxal phosphate)lysine. A substrate-binding site is contributed by threonine 345.

Belongs to the class-II pyridoxal-phosphate-dependent aminotransferase family. BioF subfamily. Homodimer. Pyridoxal 5'-phosphate is required as a cofactor.

It catalyses the reaction 6-carboxyhexanoyl-[ACP] + L-alanine + H(+) = (8S)-8-amino-7-oxononanoate + holo-[ACP] + CO2. It participates in cofactor biosynthesis; biotin biosynthesis. Its function is as follows. Catalyzes the decarboxylative condensation of pimeloyl-[acyl-carrier protein] and L-alanine to produce 8-amino-7-oxononanoate (AON), [acyl-carrier protein], and carbon dioxide. The polypeptide is 8-amino-7-oxononanoate synthase (Mycolicibacterium gilvum (strain PYR-GCK) (Mycobacterium gilvum (strain PYR-GCK))).